A 196-amino-acid chain; its full sequence is UMP-CMP kinase (196 aa).

Residue 13–18 (GAGKGT) participates in ATP binding. Residues 33–63 (SAGDLLRDERKRPGSQYGELIENYIKEGEIV) form an NMP region. Residues arginine 39, 61 to 63 (EIV), and 93 to 96 (GFPR) contribute to the a ribonucleoside 5'-phosphate site. Asparagine 100 provides a ligand contact to CMP. An LID region spans residues 133-143 (ERGKSSGRSDD). Arginine 134 is a binding site for ATP. Residues arginine 140 and arginine 151 each contribute to the a ribonucleoside 5'-phosphate site. Lysine 179 lines the ATP pocket.

It belongs to the adenylate kinase family. UMP-CMP kinase subfamily. As to quaternary structure, monomer. The cofactor is Mg(2+).

It localises to the nucleus. The protein resides in the cytoplasm. The enzyme catalyses CMP + ATP = CDP + ADP. It carries out the reaction dCMP + ATP = dCDP + ADP. It catalyses the reaction UMP + ATP = UDP + ADP. The catalysed reaction is a 2'-deoxyribonucleoside 5'-diphosphate + ATP = a 2'-deoxyribonucleoside 5'-triphosphate + ADP. The enzyme catalyses a ribonucleoside 5'-diphosphate + ATP = a ribonucleoside 5'-triphosphate + ADP. Its function is as follows. Catalyzes the phosphorylation of pyrimidine nucleoside monophosphates at the expense of ATP. Plays an important role in de novo pyrimidine nucleotide biosynthesis. Has preference for UMP and CMP as phosphate acceptors. Also displays broad nucleoside diphosphate kinase activity. The sequence is that of UMP-CMP kinase (CMPK) from Gallus gallus (Chicken).